Here is a 489-residue protein sequence, read N- to C-terminus: 3-octaprenyl-4-hydroxybenzoate carboxy-lyase (489 aa).

Mn(2+) is bound at residue asparagine 172. Prenylated FMN contacts are provided by residues isoleucine 175–arginine 177, arginine 189–leucine 191, and arginine 194–glycine 195. Glutamate 238 lines the Mn(2+) pocket. Aspartate 287 acts as the Proton donor in catalysis.

The protein belongs to the UbiD family. As to quaternary structure, homohexamer. Requires prenylated FMN as cofactor. Mn(2+) serves as cofactor.

Its subcellular location is the cell membrane. It carries out the reaction a 4-hydroxy-3-(all-trans-polyprenyl)benzoate + H(+) = a 2-(all-trans-polyprenyl)phenol + CO2. It participates in cofactor biosynthesis; ubiquinone biosynthesis. Catalyzes the decarboxylation of 3-octaprenyl-4-hydroxy benzoate to 2-octaprenylphenol, an intermediate step in ubiquinone biosynthesis. This chain is 3-octaprenyl-4-hydroxybenzoate carboxy-lyase, found in Tolumonas auensis (strain DSM 9187 / NBRC 110442 / TA 4).